The following is a 218-amino-acid chain: Mitochondrial fission factor (218 aa).

Residues 1-198 (MAEISRIQYE…ENKERAKREM (198 aa)) are Cytoplasmic-facing. Residue Thr89 is modified to Phosphothreonine. Ser129, Ser131, Ser146, and Ser171 each carry phosphoserine. The stretch at 167 to 198 (VDAASLRRQIIKLNRRLQLLEEENKERAKREM) forms a coiled coil. The chain crosses the membrane as a helical; Anchor for type IV membrane protein span at residues 199–216 (VMYSITVAFWLLNSWLWF). Over 217–218 (RR) the chain is Mitochondrial intermembrane.

It belongs to the Tango11 family. In terms of assembly, homodimer. Interacts with DNM1L. Interacts with C11orf65/MFI; the interaction inhibits MFF interaction with DNM1L.

The protein localises to the mitochondrion outer membrane. The protein resides in the peroxisome. It localises to the cytoplasmic vesicle. It is found in the secretory vesicle. Its subcellular location is the synaptic vesicle. Its function is as follows. Plays a role in mitochondrial and peroxisomal fission. Promotes the recruitment and association of the fission mediator dynamin-related protein 1 (DNM1L) to the mitochondrial surface. May be involved in regulation of synaptic vesicle membrane dynamics by recruitment of DNM1L to clathrin-containing vesicles. The polypeptide is Mitochondrial fission factor (Mff) (Rattus norvegicus (Rat)).